Here is a 212-residue protein sequence, read N- to C-terminus: Urease accessory protein UreG 2 (212 aa).

Position 11 to 18 (11 to 18 (GPVGSGKM)) interacts with GTP.

This sequence belongs to the SIMIBI class G3E GTPase family. UreG subfamily. Homodimer. UreD, UreF and UreG form a complex that acts as a GTP-hydrolysis-dependent molecular chaperone, activating the urease apoprotein by helping to assemble the nickel containing metallocenter of UreC. The UreE protein probably delivers the nickel.

The protein localises to the cytoplasm. Facilitates the functional incorporation of the urease nickel metallocenter. This process requires GTP hydrolysis, probably effectuated by UreG. In terms of biological role, disrupting the ure2 operon has no effect on urease activity, or pathogen survival in BALB/c mice when inoculated by gavage, but confers slightly enhanced resistance to low pH killing in vitro. The chain is Urease accessory protein UreG 2 from Brucella suis biovar 1 (strain 1330).